Here is a 156-residue protein sequence, read N- to C-terminus: 6,7-dimethyl-8-ribityllumazine synthase (156 aa).

5-amino-6-(D-ribitylamino)uracil contacts are provided by residues Phe-23, Ala-57 to Glu-59, and Ala-81 to Ile-83. Ser-86–Thr-87 contacts (2S)-2-hydroxy-3-oxobutyl phosphate. The active-site Proton donor is the His-89. Phe-114 is a binding site for 5-amino-6-(D-ribitylamino)uracil. Position 128 (Arg-128) interacts with (2S)-2-hydroxy-3-oxobutyl phosphate.

Belongs to the DMRL synthase family.

It catalyses the reaction (2S)-2-hydroxy-3-oxobutyl phosphate + 5-amino-6-(D-ribitylamino)uracil = 6,7-dimethyl-8-(1-D-ribityl)lumazine + phosphate + 2 H2O + H(+). It functions in the pathway cofactor biosynthesis; riboflavin biosynthesis; riboflavin from 2-hydroxy-3-oxobutyl phosphate and 5-amino-6-(D-ribitylamino)uracil: step 1/2. Functionally, catalyzes the formation of 6,7-dimethyl-8-ribityllumazine by condensation of 5-amino-6-(D-ribitylamino)uracil with 3,4-dihydroxy-2-butanone 4-phosphate. This is the penultimate step in the biosynthesis of riboflavin. This Campylobacter curvus (strain 525.92) protein is 6,7-dimethyl-8-ribityllumazine synthase.